A 450-amino-acid chain; its full sequence is Probable 1,4-beta-D-glucan cellobiohydrolase C (450 aa).

The first 19 residues, 1 to 19, serve as a signal peptide directing secretion; sequence MKHLASSIALTLLLPAVQA. The CBM1 domain maps to 20 to 55; the sequence is QQTVWGQCGGQGWSGPTNCVAGAACSTLNPYYAQCI. Cystine bridges form between Cys-27–Cys-44 and Cys-38–Cys-54. A thr-rich linker region spans residues 59–90; sequence TATSTTLSTTTTTQTTTKPTTTGPTTSAPTVT. The segment at 63–89 is disordered; it reads TTLSTTTTTQTTTKPTTTGPTTSAPTV. The segment at 91–450 is catalytic; it reads ASGNPFSGYQ…QLLTNANPSF (360 aa). Asp-180 is a catalytic residue. 2 disulfide bridges follow: Cys-181/Cys-240 and Cys-372/Cys-419. Residue Asp-226 is the Proton donor of the active site. The active-site Nucleophile is Asp-405. The N-linked (GlcNAc...) asparagine glycan is linked to Asn-409.

The protein belongs to the glycosyl hydrolase 6 (cellulase B) family.

The protein resides in the secreted. The catalysed reaction is Hydrolysis of (1-&gt;4)-beta-D-glucosidic linkages in cellulose and cellotetraose, releasing cellobiose from the non-reducing ends of the chains.. The biological conversion of cellulose to glucose generally requires three types of hydrolytic enzymes: (1) Endoglucanases which cut internal beta-1,4-glucosidic bonds; (2) Exocellobiohydrolases that cut the disaccharide cellobiose from the non-reducing end of the cellulose polymer chain; (3) Beta-1,4-glucosidases which hydrolyze the cellobiose and other short cello-oligosaccharides to glucose. The chain is Probable 1,4-beta-D-glucan cellobiohydrolase C (cbhC) from Neosartorya fischeri (strain ATCC 1020 / DSM 3700 / CBS 544.65 / FGSC A1164 / JCM 1740 / NRRL 181 / WB 181) (Aspergillus fischerianus).